Consider the following 728-residue polypeptide: Elongation factor 2 (728 aa).

Residues 19 to 261 form the tr-type G domain; that stretch reads EQIRNIAIAA…MVAEHFPNPI (243 aa). Residues 28 to 35, 94 to 98, and 148 to 151 each bind GTP; these read AHVDHGKT, DTPGH, and NKVD. A Diphthamide modification is found at histidine 596.

This sequence belongs to the TRAFAC class translation factor GTPase superfamily. Classic translation factor GTPase family. EF-G/EF-2 subfamily.

It is found in the cytoplasm. Its function is as follows. Catalyzes the GTP-dependent ribosomal translocation step during translation elongation. During this step, the ribosome changes from the pre-translocational (PRE) to the post-translocational (POST) state as the newly formed A-site-bound peptidyl-tRNA and P-site-bound deacylated tRNA move to the P and E sites, respectively. Catalyzes the coordinated movement of the two tRNA molecules, the mRNA and conformational changes in the ribosome. The polypeptide is Elongation factor 2 (Halobacterium salinarum (strain ATCC 29341 / DSM 671 / R1)).